The following is a 932-amino-acid chain: Leucine--tRNA ligase (932 aa).

Positions 38–48 match the 'HIGH' region motif; it reads PYLNGNLHAGH. Residues 630–634 carry the 'KMSKS' region motif; that stretch reads KMSKS. Lysine 633 is an ATP binding site.

It belongs to the class-I aminoacyl-tRNA synthetase family.

The protein localises to the cytoplasm. It catalyses the reaction tRNA(Leu) + L-leucine + ATP = L-leucyl-tRNA(Leu) + AMP + diphosphate. This chain is Leucine--tRNA ligase, found in Archaeoglobus fulgidus (strain ATCC 49558 / DSM 4304 / JCM 9628 / NBRC 100126 / VC-16).